Here is a 255-residue protein sequence, read N- to C-terminus: MLKIGPYEFSSRLLLGTGKYPSLDVQKEAVEASGAEILTFAVRRMNIFSPEQPNFLEQLDLSKYKLLPNTAGAKTAEEAVRIARLAKASGLCDMIKVEVIGCDKTLLPDPVETLKAAEMLLEEGFIVLPYTSDDVVLARRLQELGCHAVMPGASPIGSGQGIINPLNLSFIIEQATVPVIVDAGIGGPADAVLAMELGADGVLLNTAVSGAADPVKMAKAMKLAIEAGRLGYEAGRIPKKRYASASSPMEGMSVV.

Lys96 acts as the Schiff-base intermediate with DXP in catalysis. Residues Gly157, 183 to 184 (AG), and 205 to 206 (NT) each bind 1-deoxy-D-xylulose 5-phosphate.

Belongs to the ThiG family. As to quaternary structure, homotetramer. Forms heterodimers with either ThiH or ThiS.

It localises to the cytoplasm. It catalyses the reaction [ThiS sulfur-carrier protein]-C-terminal-Gly-aminoethanethioate + 2-iminoacetate + 1-deoxy-D-xylulose 5-phosphate = [ThiS sulfur-carrier protein]-C-terminal Gly-Gly + 2-[(2R,5Z)-2-carboxy-4-methylthiazol-5(2H)-ylidene]ethyl phosphate + 2 H2O + H(+). The protein operates within cofactor biosynthesis; thiamine diphosphate biosynthesis. Its function is as follows. Catalyzes the rearrangement of 1-deoxy-D-xylulose 5-phosphate (DXP) to produce the thiazole phosphate moiety of thiamine. Sulfur is provided by the thiocarboxylate moiety of the carrier protein ThiS. In vitro, sulfur can be provided by H(2)S. This is Thiazole synthase from Geobacillus thermodenitrificans (strain NG80-2).